The primary structure comprises 261 residues: Probable septum site-determining protein MinC (261 aa).

The interval 106–144 is disordered; the sequence is RAPAAKPADEAEPAAVPAVETAAAPAAAAAPEQSSDPAP. The span at 118–144 shows a compositional bias: low complexity; that stretch reads PAAVPAVETAAAPAAAAAPEQSSDPAP.

It belongs to the MinC family. Interacts with MinD and FtsZ.

Its function is as follows. Cell division inhibitor that blocks the formation of polar Z ring septums. Rapidly oscillates between the poles of the cell to destabilize FtsZ filaments that have formed before they mature into polar Z rings. Prevents FtsZ polymerization. This is Probable septum site-determining protein MinC from Burkholderia orbicola (strain MC0-3).